Consider the following 236-residue polypeptide: 2,3,4,5-tetrahydropyridine-2,6-dicarboxylate N-acetyltransferase (236 aa).

It belongs to the transferase hexapeptide repeat family. DapH subfamily.

The catalysed reaction is (S)-2,3,4,5-tetrahydrodipicolinate + acetyl-CoA + H2O = L-2-acetamido-6-oxoheptanedioate + CoA. Its pathway is amino-acid biosynthesis; L-lysine biosynthesis via DAP pathway; LL-2,6-diaminopimelate from (S)-tetrahydrodipicolinate (acetylase route): step 1/3. Catalyzes the transfer of an acetyl group from acetyl-CoA to tetrahydrodipicolinate. This is 2,3,4,5-tetrahydropyridine-2,6-dicarboxylate N-acetyltransferase from Thermotoga maritima (strain ATCC 43589 / DSM 3109 / JCM 10099 / NBRC 100826 / MSB8).